The chain runs to 281 residues: NAD kinase (281 aa).

Asp-61 functions as the Proton acceptor in the catalytic mechanism. Residues 61-62, 134-135, Arg-145, Asp-164, 175-180, and Gln-234 contribute to the NAD(+) site; these read DG, ND, and TAYSLS.

It belongs to the NAD kinase family. Requires a divalent metal cation as cofactor.

It is found in the cytoplasm. The enzyme catalyses NAD(+) + ATP = ADP + NADP(+) + H(+). Involved in the regulation of the intracellular balance of NAD and NADP, and is a key enzyme in the biosynthesis of NADP. Catalyzes specifically the phosphorylation on 2'-hydroxyl of the adenosine moiety of NAD to yield NADP. This Clostridium botulinum (strain Loch Maree / Type A3) protein is NAD kinase.